The sequence spans 197 residues: Thymidylate kinase (197 aa).

Residue 7-14 (GIDGSGKS) participates in ATP binding.

Belongs to the thymidylate kinase family.

The catalysed reaction is dTMP + ATP = dTDP + ADP. In terms of biological role, phosphorylation of dTMP to form dTDP in both de novo and salvage pathways of dTTP synthesis. The protein is Thymidylate kinase of Thermotoga sp. (strain RQ2).